Reading from the N-terminus, the 305-residue chain is tRNA pseudouridine synthase B (305 aa).

Aspartate 39 acts as the Nucleophile in catalysis.

It belongs to the pseudouridine synthase TruB family. Type 1 subfamily.

It catalyses the reaction uridine(55) in tRNA = pseudouridine(55) in tRNA. In terms of biological role, responsible for synthesis of pseudouridine from uracil-55 in the psi GC loop of transfer RNAs. This chain is tRNA pseudouridine synthase B, found in Staphylococcus saprophyticus subsp. saprophyticus (strain ATCC 15305 / DSM 20229 / NCIMB 8711 / NCTC 7292 / S-41).